We begin with the raw amino-acid sequence, 502 residues long: MQLPTQQVAVLDAASTDDPQRIEALAADTDYPPETIAGAALALEAEGLVAVTETTTTTVSLTDEGHAYATDGLPEVRLYRAALDAGADDAPVEMGSVIGAAGLDGPQVDIALSNYARKGYGTIDSGALAADPDADPENDPEADALATLTDGDSVDDDAVVDQLASRDLVTVSERTVRSVTLTEAGVTELMAGVEATDEVGELTPELLASGEWADVEFADYNVAADAADHTPGKTHVLRQAAERVTDVLVGMGFQEMAGPHVDADFYINDCLFMPQDHPARNHWDRFALSNPARIDELPDALVERVERAHREGAGDDGDGYHSPWDEDFARALALRGHTTSLTARHLAGLADADVEAPARYFSVEKAYRNDTLDATHLLEFFQIEGWVLADDLSVRDLMGTFREFYSQFGIHDLQFKPTYNPYTEPSFELFGRHPETGELIEIGNSGIFRPEMLDPLDVDGDVMAWGLALERLLMLMTGFEDIRDVHGTLCDVGFLRNAEVVY.

L-phenylalanine-binding positions include Thr-339, 382 to 384 (QIE), and Tyr-422. Glu-424 provides a ligand contact to Mg(2+). Position 448 (Phe-448) interacts with L-phenylalanine.

Belongs to the class-II aminoacyl-tRNA synthetase family. Phe-tRNA synthetase alpha subunit type 2 subfamily. As to quaternary structure, tetramer of two alpha and two beta subunits. Mg(2+) is required as a cofactor.

Its subcellular location is the cytoplasm. The enzyme catalyses tRNA(Phe) + L-phenylalanine + ATP = L-phenylalanyl-tRNA(Phe) + AMP + diphosphate + H(+). The sequence is that of Phenylalanine--tRNA ligase alpha subunit from Halobacterium salinarum (strain ATCC 29341 / DSM 671 / R1).